The chain runs to 680 residues: DNA ligase (680 aa).

NAD(+) is bound by residues 35-39 (DADFD), 86-87 (SL), and Glu-111. The active-site N6-AMP-lysine intermediate is Lys-113. Residues Arg-134, Glu-174, Lys-290, and Lys-314 each coordinate NAD(+). 4 residues coordinate Zn(2+): Cys-408, Cys-411, Cys-427, and Cys-433. In terms of domain architecture, BRCT spans 597–680 (VAEQTLEGLT…RLLNTGSADE (84 aa)).

The protein belongs to the NAD-dependent DNA ligase family. LigA subfamily. The cofactor is Mg(2+). It depends on Mn(2+) as a cofactor.

It catalyses the reaction NAD(+) + (deoxyribonucleotide)n-3'-hydroxyl + 5'-phospho-(deoxyribonucleotide)m = (deoxyribonucleotide)n+m + AMP + beta-nicotinamide D-nucleotide.. DNA ligase that catalyzes the formation of phosphodiester linkages between 5'-phosphoryl and 3'-hydroxyl groups in double-stranded DNA using NAD as a coenzyme and as the energy source for the reaction. It is essential for DNA replication and repair of damaged DNA. The polypeptide is DNA ligase (Corynebacterium glutamicum (strain R)).